We begin with the raw amino-acid sequence, 1508 residues long: DNA-directed RNA polymerase subunit beta' (1508 aa).

Residues C71, C73, C86, and C89 each contribute to the Zn(2+) site. The Mg(2+) site is built by D470, D472, and D474. Positions 804, 878, 885, and 888 each coordinate Zn(2+).

Belongs to the RNA polymerase beta' chain family. The RNAP catalytic core consists of 2 alpha, 1 beta, 1 beta' and 1 omega subunit. When a sigma factor is associated with the core the holoenzyme is formed, which can initiate transcription. Requires Mg(2+) as cofactor. The cofactor is Zn(2+).

It carries out the reaction RNA(n) + a ribonucleoside 5'-triphosphate = RNA(n+1) + diphosphate. Functionally, DNA-dependent RNA polymerase catalyzes the transcription of DNA into RNA using the four ribonucleoside triphosphates as substrates. The protein is DNA-directed RNA polymerase subunit beta' of Campylobacter fetus subsp. fetus (strain 82-40).